Here is a 478-residue protein sequence, read N- to C-terminus: Ribosomal RNA small subunit methyltransferase F (478 aa).

Residues 121 to 127 (ASAPGSK), Glu-145, Asp-172, and Asp-190 contribute to the S-adenosyl-L-methionine site. The Nucleophile role is filled by Cys-243.

The protein belongs to the class I-like SAM-binding methyltransferase superfamily. RsmB/NOP family.

The protein resides in the cytoplasm. The catalysed reaction is cytidine(1407) in 16S rRNA + S-adenosyl-L-methionine = 5-methylcytidine(1407) in 16S rRNA + S-adenosyl-L-homocysteine + H(+). Its function is as follows. Specifically methylates the cytosine at position 1407 (m5C1407) of 16S rRNA. The polypeptide is Ribosomal RNA small subunit methyltransferase F (Shewanella woodyi (strain ATCC 51908 / MS32)).